We begin with the raw amino-acid sequence, 1273 residues long: Probable methionine synthase (1273 aa).

Residues 7–327 (FKELADIAKE…DHINAMYKAV (321 aa)) form the Hcy-binding domain. Zn(2+) is bound by residues Cys-249, Cys-312, and Cys-313. The Pterin-binding domain maps to 360-621 (FVNIGERCNV…IDKPLLQLLE (262 aa)). Residues 652 to 749 (KTDEWRNTSV…FMDAERQANI (98 aa)) enclose the B12-binding N-terminal domain. Residues Glu-699, 772–776 (GDVHD), His-775, Ser-820, Thr-824, and Ala-876 contribute to the methylcob(III)alamin site. Positions 762-897 (QGTVVIATVK…DMTVRDAFLQ (136 aa)) constitute a B12-binding domain. The 347-residue stretch at 927–1273 (SLKDRRFVAL…LSPIIGYELD (347 aa)) folds into the AdoMet activation domain. Residues Asp-977, Arg-1171, and 1225-1226 (YF) each bind S-adenosyl-L-methionine.

The protein belongs to the vitamin-B12 dependent methionine synthase family. Requires methylcob(III)alamin as cofactor. Zn(2+) serves as cofactor.

The catalysed reaction is (6S)-5-methyl-5,6,7,8-tetrahydrofolate + L-homocysteine = (6S)-5,6,7,8-tetrahydrofolate + L-methionine. It functions in the pathway amino-acid biosynthesis; L-methionine biosynthesis via de novo pathway; L-methionine from L-homocysteine (MetH route): step 1/1. Functionally, catalyzes the transfer of a methyl group from methyl-cobalamin to homocysteine, yielding enzyme-bound cob(I)alamin and methionine. Subsequently, remethylates the cofactor using methyltetrahydrofolate. This is Probable methionine synthase (metr-1) from Caenorhabditis briggsae.